Here is a 494-residue protein sequence, read N- to C-terminus: Probable cytosol aminopeptidase (494 aa).

The Mn(2+) site is built by Lys260 and Asp265. Lys272 is an active-site residue. Residues Asp283, Asp342, and Glu344 each contribute to the Mn(2+) site. The active site involves Arg346.

Belongs to the peptidase M17 family. The cofactor is Mn(2+).

The protein resides in the cytoplasm. It catalyses the reaction Release of an N-terminal amino acid, Xaa-|-Yaa-, in which Xaa is preferably Leu, but may be other amino acids including Pro although not Arg or Lys, and Yaa may be Pro. Amino acid amides and methyl esters are also readily hydrolyzed, but rates on arylamides are exceedingly low.. It carries out the reaction Release of an N-terminal amino acid, preferentially leucine, but not glutamic or aspartic acids.. Its function is as follows. Presumably involved in the processing and regular turnover of intracellular proteins. Catalyzes the removal of unsubstituted N-terminal amino acids from various peptides. This is Probable cytosol aminopeptidase from Bacillus cereus (strain ATCC 14579 / DSM 31 / CCUG 7414 / JCM 2152 / NBRC 15305 / NCIMB 9373 / NCTC 2599 / NRRL B-3711).